Reading from the N-terminus, the 274-residue chain is Diaminopimelate epimerase (274 aa).

Residues Asn11, Gln44, and Asn64 each coordinate substrate. The active-site Proton donor is Cys73. Substrate is bound by residues 74-75, Asn157, Asn190, and 208-209; these read GN and ER. The active-site Proton acceptor is the Cys217. 218-219 contacts substrate; it reads GT.

Belongs to the diaminopimelate epimerase family. In terms of assembly, homodimer.

Its subcellular location is the cytoplasm. It carries out the reaction (2S,6S)-2,6-diaminopimelate = meso-2,6-diaminopimelate. Its pathway is amino-acid biosynthesis; L-lysine biosynthesis via DAP pathway; DL-2,6-diaminopimelate from LL-2,6-diaminopimelate: step 1/1. Its function is as follows. Catalyzes the stereoinversion of LL-2,6-diaminopimelate (L,L-DAP) to meso-diaminopimelate (meso-DAP), a precursor of L-lysine and an essential component of the bacterial peptidoglycan. The sequence is that of Diaminopimelate epimerase from Blochmanniella pennsylvanica (strain BPEN).